The primary structure comprises 361 residues: Molybdenum import ATP-binding protein ModC (361 aa).

The 228-residue stretch at 1–228 (MLNINIEKQL…EQMRPWVPLQ (228 aa)) folds into the ABC transporter domain. 31–38 (GRSGAGKT) serves as a coordination point for ATP. The Mop domain occupies 289–356 (GSSVRNLLRG…IKGVTMTQMD (68 aa)).

This sequence belongs to the ABC transporter superfamily. Molybdate importer (TC 3.A.1.8) family. In terms of assembly, the complex is composed of two ATP-binding proteins (ModC), two transmembrane proteins (ModB) and a solute-binding protein (ModA).

Its subcellular location is the cell inner membrane. The catalysed reaction is molybdate(out) + ATP + H2O = molybdate(in) + ADP + phosphate + H(+). In terms of biological role, part of the ABC transporter complex ModABC involved in molybdenum import. Responsible for energy coupling to the transport system. The protein is Molybdenum import ATP-binding protein ModC of Shewanella sp. (strain MR-7).